Here is a 585-residue protein sequence, read N- to C-terminus: Chaperonin GroEL, chloroplastic (585 aa).

Residues Thr-55 to Pro-58, Asp-113 to Thr-117, Gly-442, Asn-507 to Ala-509, and Asp-523 each bind ATP.

Belongs to the chaperonin (HSP60) family. As to quaternary structure, forms a cylinder of 14 subunits composed of two heptameric rings stacked back-to-back. Interacts with the co-chaperonin GroES.

Its subcellular location is the plastid. The protein localises to the chloroplast. It catalyses the reaction ATP + H2O + a folded polypeptide = ADP + phosphate + an unfolded polypeptide.. Functionally, together with its co-chaperonin GroES, plays an essential role in assisting protein folding. The GroEL-GroES system forms a nano-cage that allows encapsulation of the non-native substrate proteins and provides a physical environment optimized to promote and accelerate protein folding. The polypeptide is Chaperonin GroEL, chloroplastic (Pyrenomonas salina).